The following is a 126-amino-acid chain: Aspartate 1-decarboxylase (126 aa).

The Schiff-base intermediate with substrate; via pyruvic acid role is filled by Ser25. At Ser25 the chain carries Pyruvic acid (Ser). Position 57 (Thr57) interacts with substrate. The Proton donor role is filled by Tyr58. 73 to 75 (GAA) lines the substrate pocket.

It belongs to the PanD family. In terms of assembly, heterooctamer of four alpha and four beta subunits. Requires pyruvate as cofactor. Post-translationally, is synthesized initially as an inactive proenzyme, which is activated by self-cleavage at a specific serine bond to produce a beta-subunit with a hydroxyl group at its C-terminus and an alpha-subunit with a pyruvoyl group at its N-terminus.

Its subcellular location is the cytoplasm. The enzyme catalyses L-aspartate + H(+) = beta-alanine + CO2. It functions in the pathway cofactor biosynthesis; (R)-pantothenate biosynthesis; beta-alanine from L-aspartate: step 1/1. Its function is as follows. Catalyzes the pyruvoyl-dependent decarboxylation of aspartate to produce beta-alanine. This is Aspartate 1-decarboxylase from Chromohalobacter salexigens (strain ATCC BAA-138 / DSM 3043 / CIP 106854 / NCIMB 13768 / 1H11).